Here is a 364-residue protein sequence, read N- to C-terminus: 3-isopropylmalate dehydrogenase (364 aa).

79–90 serves as a coordination point for NAD(+); sequence GPKWGTGSVRPE. Substrate is bound by residues arginine 97, arginine 107, arginine 136, and aspartate 225. Residues aspartate 225, aspartate 250, and aspartate 254 each contribute to the Mg(2+) site. Position 289–300 (289–300) interacts with NAD(+); sequence GSAPDLPKNKVN.

This sequence belongs to the isocitrate and isopropylmalate dehydrogenases family. Homodimer. It depends on Mg(2+) as a cofactor. Mn(2+) serves as cofactor.

The protein localises to the cytoplasm. It catalyses the reaction (2R,3S)-3-isopropylmalate + NAD(+) = 4-methyl-2-oxopentanoate + CO2 + NADH. It functions in the pathway amino-acid biosynthesis; L-leucine biosynthesis; L-leucine from 3-methyl-2-oxobutanoate: step 3/4. Catalyzes the oxidation of 3-carboxy-2-hydroxy-4-methylpentanoate (3-isopropylmalate) to 3-carboxy-4-methyl-2-oxopentanoate. The product decarboxylates to 4-methyl-2 oxopentanoate. The sequence is that of 3-isopropylmalate dehydrogenase (LEU2) from Saccharomyces cerevisiae (strain ATCC 204508 / S288c) (Baker's yeast).